The following is a 354-amino-acid chain: Photosystem II protein D1 1 (354 aa).

3 helical membrane-spanning segments follow: residues 29–46, 118–133, and 142–156; these read YIGW…TATT, HFLI…EWEL, and WIAV…AATA. H118 serves as a coordination point for chlorophyll a. Y126 is a binding site for pheophytin a. [CaMn4O5] cluster contacts are provided by D170 and E189. A helical transmembrane segment spans residues 197–218; it reads FHQLGVAGVFGGALFSAMHGSL. H198 lines the chlorophyll a pocket. Residues H215 and 264–265 each bind a quinone; that span reads SF. Position 215 (H215) interacts with Fe cation. A Fe cation-binding site is contributed by H272. Residues 274 to 288 form a helical membrane-spanning segment; that stretch reads FLAAWPVIGIWFTAL. The [CaMn4O5] cluster site is built by H332, E333, D342, and A344. The propeptide occupies 345-354; that stretch reads AVEVAPAIRG.

Belongs to the reaction center PufL/M/PsbA/D family. As to quaternary structure, PSII is composed of 1 copy each of membrane proteins PsbA, PsbB, PsbC, PsbD, PsbE, PsbF, PsbH, PsbI, PsbJ, PsbK, PsbL, PsbM, PsbT, PsbX, PsbY, PsbZ, Psb30/Ycf12, peripheral proteins PsbO, CyanoQ (PsbQ), PsbU, PsbV and a large number of cofactors. It forms dimeric complexes. The cofactor is The D1/D2 heterodimer binds P680, chlorophylls that are the primary electron donor of PSII, and subsequent electron acceptors. It shares a non-heme iron and each subunit binds pheophytin, quinone, additional chlorophylls, carotenoids and lipids. D1 provides most of the ligands for the Mn4-Ca-O5 cluster of the oxygen-evolving complex (OEC). There is also a Cl(-1) ion associated with D1 and D2, which is required for oxygen evolution. The PSII complex binds additional chlorophylls, carotenoids and specific lipids.. Post-translationally, tyr-161 forms a radical intermediate that is referred to as redox-active TyrZ, YZ or Y-Z. C-terminally processed by CtpA; processing is essential to allow assembly of the oxygen-evolving complex and thus photosynthetic growth.

The protein resides in the cellular thylakoid membrane. The catalysed reaction is 2 a plastoquinone + 4 hnu + 2 H2O = 2 a plastoquinol + O2. Photosystem II (PSII) is a light-driven water:plastoquinone oxidoreductase that uses light energy to abstract electrons from H(2)O, generating O(2) and a proton gradient subsequently used for ATP formation. It consists of a core antenna complex that captures photons, and an electron transfer chain that converts photonic excitation into a charge separation. The D1/D2 (PsbA/PsbD) reaction center heterodimer binds P680, the primary electron donor of PSII as well as several subsequent electron acceptors. In Synechococcus sp. (strain JA-3-3Ab) (Cyanobacteria bacterium Yellowstone A-Prime), this protein is Photosystem II protein D1 1.